Here is a 348-residue protein sequence, read N- to C-terminus: Protein pelota homolog (348 aa).

Belongs to the eukaryotic release factor 1 family. Pelota subfamily. Monomer. A divalent metal cation is required as a cofactor.

The protein localises to the cytoplasm. May function in recognizing stalled ribosomes, interact with stem-loop structures in stalled mRNA molecules, and effect endonucleolytic cleavage of the mRNA. May play a role in the release non-functional ribosomes and degradation of damaged mRNAs. Has endoribonuclease activity. The chain is Protein pelota homolog from Methanococcus maripaludis (strain C7 / ATCC BAA-1331).